Here is a 344-residue protein sequence, read N- to C-terminus: Dihydroorotase (344 aa).

H13 and H15 together coordinate Zn(2+). Substrate-binding positions include 15-17 and N41; that span reads HLR. Zn(2+) is bound by residues K99, H136, and H174. K99 carries the N6-carboxylysine modification. Position 136 (H136) interacts with substrate. Substrate is bound at residue L219. D247 contributes to the Zn(2+) binding site. Residue D247 is part of the active site. Residues H251 and A263 each contribute to the substrate site.

The protein belongs to the metallo-dependent hydrolases superfamily. DHOase family. Class II DHOase subfamily. In terms of assembly, homodimer. It depends on Zn(2+) as a cofactor.

The enzyme catalyses (S)-dihydroorotate + H2O = N-carbamoyl-L-aspartate + H(+). It participates in pyrimidine metabolism; UMP biosynthesis via de novo pathway; (S)-dihydroorotate from bicarbonate: step 3/3. In terms of biological role, catalyzes the reversible cyclization of carbamoyl aspartate to dihydroorotate. The protein is Dihydroorotase of Shewanella denitrificans (strain OS217 / ATCC BAA-1090 / DSM 15013).